The chain runs to 567 residues: Dihydroxy-acid dehydratase (567 aa).

Residue cysteine 57 participates in [2Fe-2S] cluster binding. Aspartate 89 provides a ligand contact to Mg(2+). Cysteine 130 is a [2Fe-2S] cluster binding site. Residues aspartate 131 and lysine 132 each coordinate Mg(2+). At lysine 132 the chain carries N6-carboxylysine. Cysteine 202 serves as a coordination point for [2Fe-2S] cluster. Glutamate 453 contributes to the Mg(2+) binding site. Serine 479 acts as the Proton acceptor in catalysis.

Belongs to the IlvD/Edd family. Homodimer. Requires [2Fe-2S] cluster as cofactor. It depends on Mg(2+) as a cofactor.

It catalyses the reaction (2R)-2,3-dihydroxy-3-methylbutanoate = 3-methyl-2-oxobutanoate + H2O. The enzyme catalyses (2R,3R)-2,3-dihydroxy-3-methylpentanoate = (S)-3-methyl-2-oxopentanoate + H2O. It functions in the pathway amino-acid biosynthesis; L-isoleucine biosynthesis; L-isoleucine from 2-oxobutanoate: step 3/4. The protein operates within amino-acid biosynthesis; L-valine biosynthesis; L-valine from pyruvate: step 3/4. Functionally, functions in the biosynthesis of branched-chain amino acids. Catalyzes the dehydration of (2R,3R)-2,3-dihydroxy-3-methylpentanoate (2,3-dihydroxy-3-methylvalerate) into 2-oxo-3-methylpentanoate (2-oxo-3-methylvalerate) and of (2R)-2,3-dihydroxy-3-methylbutanoate (2,3-dihydroxyisovalerate) into 2-oxo-3-methylbutanoate (2-oxoisovalerate), the penultimate precursor to L-isoleucine and L-valine, respectively. This Nocardioides sp. (strain ATCC BAA-499 / JS614) protein is Dihydroxy-acid dehydratase.